Consider the following 305-residue polypeptide: Serine/threonine-protein phosphatase 6 catalytic subunit (305 aa).

Residues aspartate 54, histidine 56, aspartate 82, and asparagine 114 each contribute to the Mn(2+) site. Histidine 115 acts as the Proton donor in catalysis. Mn(2+)-binding residues include histidine 164 and histidine 238.

The protein belongs to the PPP phosphatase family. PP-6 (PP-V) subfamily. Mn(2+) is required as a cofactor.

It carries out the reaction O-phospho-L-seryl-[protein] + H2O = L-seryl-[protein] + phosphate. The enzyme catalyses O-phospho-L-threonyl-[protein] + H2O = L-threonyl-[protein] + phosphate. This Dictyostelium discoideum (Social amoeba) protein is Serine/threonine-protein phosphatase 6 catalytic subunit (ppp6c).